The following is a 277-amino-acid chain: Chitosanase (277 aa).

Positions 1–35 (MKISMQKADFWKKAAISLLVFTMFFTLMMSETVFA) are cleaved as a signal peptide. The active-site Proton donor is Glu54. Asp70 functions as the Nucleophile in the catalytic mechanism.

The protein belongs to the glycosyl hydrolase 46 family.

The protein localises to the secreted. It catalyses the reaction Endohydrolysis of beta-(1-&gt;4)-linkages between D-glucosamine residues in a partly acetylated chitosan.. In terms of biological role, aids in the defense against invading fungal pathogens by degrading their cell wall chitosan. In Bacillus subtilis (strain 168), this protein is Chitosanase (csn).